The primary structure comprises 296 residues: Probable AP endonuclease (296 aa).

A disulfide bond links C16 and C20. Zn(2+) contacts are provided by H78, H115, E142, H182, H218, D231, H233, and E271.

The protein belongs to the AP endonuclease 2 family. Zn(2+) is required as a cofactor.

It is found in the host nucleus. The protein resides in the host cytoplasm. The protein localises to the virion. In terms of biological role, endonuclease that plays a role in DNA repair. Cleaves phosphodiester bonds on the 5' side of apurinic or apyrimidinic sites (AP sites). In addition to endonuclease activity, the ASFV enzyme has a proofreading 3'-5' exonuclease activity that is considerably more efficient in the elimination of a mismatch than in that of a correctly paired base. Displays 3'-phosphatase and 3'-repair diesterase activities. The single nucleotide gaps generated by the AP endonuclease are filled by the viral AP endonuclease and DNA ligase. The sequence is that of Probable AP endonuclease from Ornithodoros (relapsing fever ticks).